The sequence spans 241 residues: Adenosylcobinamide-GDP ribazoletransferase (241 aa).

Helical transmembrane passes span 34-54 (RIPA…FTGS), 55-75 (FLSL…GFYL), 109-129 (VGPF…ELIT), 133-153 (PVAF…VLVF), 165-185 (MLFP…LPLL), 186-206 (LIDV…GFLI), and 221-241 (VLGG…NYLI).

Belongs to the CobS family. Mg(2+) serves as cofactor.

It is found in the cell inner membrane. The enzyme catalyses alpha-ribazole + adenosylcob(III)inamide-GDP = adenosylcob(III)alamin + GMP + H(+). It carries out the reaction alpha-ribazole 5'-phosphate + adenosylcob(III)inamide-GDP = adenosylcob(III)alamin 5'-phosphate + GMP + H(+). It participates in cofactor biosynthesis; adenosylcobalamin biosynthesis; adenosylcobalamin from cob(II)yrinate a,c-diamide: step 7/7. Functionally, joins adenosylcobinamide-GDP and alpha-ribazole to generate adenosylcobalamin (Ado-cobalamin). Also synthesizes adenosylcobalamin 5'-phosphate from adenosylcobinamide-GDP and alpha-ribazole 5'-phosphate. This is Adenosylcobinamide-GDP ribazoletransferase from Fervidobacterium nodosum (strain ATCC 35602 / DSM 5306 / Rt17-B1).